The following is a 419-amino-acid chain: Tryptophan synthase beta chain (419 aa).

Lys-113 carries the N6-(pyridoxal phosphate)lysine modification.

Belongs to the TrpB family. As to quaternary structure, tetramer of two alpha and two beta chains. Pyridoxal 5'-phosphate is required as a cofactor.

It carries out the reaction (1S,2R)-1-C-(indol-3-yl)glycerol 3-phosphate + L-serine = D-glyceraldehyde 3-phosphate + L-tryptophan + H2O. It functions in the pathway amino-acid biosynthesis; L-tryptophan biosynthesis; L-tryptophan from chorismate: step 5/5. The beta subunit is responsible for the synthesis of L-tryptophan from indole and L-serine. In Picrophilus torridus (strain ATCC 700027 / DSM 9790 / JCM 10055 / NBRC 100828 / KAW 2/3), this protein is Tryptophan synthase beta chain.